Reading from the N-terminus, the 32-residue chain is Islet amyloid polypeptide (32 aa).

The protein belongs to the calcitonin family. In terms of assembly, can form homodimers. Interacts with IDE and INS. Interaction with INS inhibits homodimerization and fibril formation.

The protein resides in the secreted. Amylin/IAPP is a glucoregulatory peptide hormone that plays an important role in the regulation of energy homeostasis. Selectively inhibits insulin-stimulated glucose utilization and glycogen deposition in muscle, while not affecting adipocyte glucose metabolism. IAPP function is mediated by the CALCR-RAMPs (AMYRs) receptor complexes. Amylin can also bind CALCR receptor in the absence of RAMPs, although it is more selective for AMYRs. This chain is Islet amyloid polypeptide (IAPP), found in Ovis aries (Sheep).